Here is a 152-residue protein sequence, read N- to C-terminus: 6,7-dimethyl-8-ribityllumazine synthase (152 aa).

5-amino-6-(D-ribitylamino)uracil contacts are provided by residues Phe21, 55–57 (AFE), and 79–81 (CVI). Residue 84 to 85 (AT) participates in (2S)-2-hydroxy-3-oxobutyl phosphate binding. Catalysis depends on His87, which acts as the Proton donor. Phe112 serves as a coordination point for 5-amino-6-(D-ribitylamino)uracil. Arg126 provides a ligand contact to (2S)-2-hydroxy-3-oxobutyl phosphate.

It belongs to the DMRL synthase family. In terms of assembly, forms an icosahedral capsid composed of 60 subunits, arranged as a dodecamer of pentamers.

It catalyses the reaction (2S)-2-hydroxy-3-oxobutyl phosphate + 5-amino-6-(D-ribitylamino)uracil = 6,7-dimethyl-8-(1-D-ribityl)lumazine + phosphate + 2 H2O + H(+). The protein operates within cofactor biosynthesis; riboflavin biosynthesis; riboflavin from 2-hydroxy-3-oxobutyl phosphate and 5-amino-6-(D-ribitylamino)uracil: step 1/2. Catalyzes the formation of 6,7-dimethyl-8-ribityllumazine by condensation of 5-amino-6-(D-ribitylamino)uracil with 3,4-dihydroxy-2-butanone 4-phosphate. This is the penultimate step in the biosynthesis of riboflavin. This chain is 6,7-dimethyl-8-ribityllumazine synthase, found in Staphylococcus carnosus (strain TM300).